Consider the following 270-residue polypeptide: 2-C-methyl-D-erythritol 4-phosphate cytidylyltransferase (270 aa).

A disordered region spans residues 1-33; the sequence is MSDESRPSPAETPATTFAETSAETSAAGRSPAR. Low complexity predominate over residues 7-27; that stretch reads PSPAETPATTFAETSAETSAA.

Belongs to the IspD/TarI cytidylyltransferase family. IspD subfamily.

It catalyses the reaction 2-C-methyl-D-erythritol 4-phosphate + CTP + H(+) = 4-CDP-2-C-methyl-D-erythritol + diphosphate. It participates in isoprenoid biosynthesis; isopentenyl diphosphate biosynthesis via DXP pathway; isopentenyl diphosphate from 1-deoxy-D-xylulose 5-phosphate: step 2/6. In terms of biological role, catalyzes the formation of 4-diphosphocytidyl-2-C-methyl-D-erythritol from CTP and 2-C-methyl-D-erythritol 4-phosphate (MEP). The chain is 2-C-methyl-D-erythritol 4-phosphate cytidylyltransferase from Streptomyces coelicolor (strain ATCC BAA-471 / A3(2) / M145).